The sequence spans 349 residues: Protein RecA (349 aa).

65–72 (GPESSGKT) contributes to the ATP binding site. Residues 329–349 (KASDQTAAHDETEEEPDLLES) are disordered. A compositionally biased stretch (acidic residues) spans 339-349 (ETEEEPDLLES).

It belongs to the RecA family.

It localises to the cytoplasm. Its function is as follows. Can catalyze the hydrolysis of ATP in the presence of single-stranded DNA, the ATP-dependent uptake of single-stranded DNA by duplex DNA, and the ATP-dependent hybridization of homologous single-stranded DNAs. It interacts with LexA causing its activation and leading to its autocatalytic cleavage. This is Protein RecA from Acinetobacter baylyi (strain ATCC 33305 / BD413 / ADP1).